The sequence spans 149 residues: SsrA-binding protein (149 aa).

This sequence belongs to the SmpB family.

Its subcellular location is the cytoplasm. Required for rescue of stalled ribosomes mediated by trans-translation. Binds to transfer-messenger RNA (tmRNA), required for stable association of tmRNA with ribosomes. tmRNA and SmpB together mimic tRNA shape, replacing the anticodon stem-loop with SmpB. tmRNA is encoded by the ssrA gene; the 2 termini fold to resemble tRNA(Ala) and it encodes a 'tag peptide', a short internal open reading frame. During trans-translation Ala-aminoacylated tmRNA acts like a tRNA, entering the A-site of stalled ribosomes, displacing the stalled mRNA. The ribosome then switches to translate the ORF on the tmRNA; the nascent peptide is terminated with the 'tag peptide' encoded by the tmRNA and targeted for degradation. The ribosome is freed to recommence translation, which seems to be the essential function of trans-translation. The chain is SsrA-binding protein from Wolbachia sp. subsp. Brugia malayi (strain TRS).